The chain runs to 195 residues: Small ribosomal subunit protein eS7 (195 aa).

Phosphothreonine occurs at positions 146 and 151. Phosphoserine is present on residues serine 172 and serine 173.

The protein belongs to the eukaryotic ribosomal protein eS7 family. As to quaternary structure, component of the small ribosomal subunit (SSU). Mature yeast ribosomes consist of a small (40S) and a large (60S) subunit. The 40S small subunit contains 1 molecule of ribosomal RNA (18S rRNA) and at least 33 different proteins. The large 60S subunit contains 3 rRNA molecules (25S, 5.8S and 5S rRNA) and at least 46 different proteins. Interacts with snoRNA U3. uS11 interacts with MPP10. Component of the ribosomal small subunit (SSU) processome composed of at least 40 protein subunits and snoRNA U3.

The protein resides in the cytoplasm. It is found in the nucleus. Its subcellular location is the nucleolus. In terms of biological role, component of the ribosome, a large ribonucleoprotein complex responsible for the synthesis of proteins in the cell. The small ribosomal subunit (SSU) binds messenger RNAs (mRNAs) and translates the encoded message by selecting cognate aminoacyl-transfer RNA (tRNA) molecules. The large subunit (LSU) contains the ribosomal catalytic site termed the peptidyl transferase center (PTC), which catalyzes the formation of peptide bonds, thereby polymerizing the amino acids delivered by tRNAs into a polypeptide chain. The nascent polypeptides leave the ribosome through a tunnel in the LSU and interact with protein factors that function in enzymatic processing, targeting, and the membrane insertion of nascent chains at the exit of the ribosomal tunnel. eS7 is involved in nucleolar processing of pre-18S ribosomal RNA and ribosome assembly. The chain is Small ribosomal subunit protein eS7 (rps7) from Schizosaccharomyces pombe (strain 972 / ATCC 24843) (Fission yeast).